The chain runs to 1562 residues: MANNEDKLRDYLKRVTAELQQNTRRLREIEGRTHEPVAIVGMACRLPGGVASPEDLWQLVAGDGDAISEFPQDRGWDVEGLYDPDPDASGRTYCRSGGFLHDAGEFDADFFGISPREALAMDPQQRLSLTTAWEAIESAGIDPTALKGSGLGVFVGGWHTGYTSGQTTAVQSPELEGHLVSGAALGFLSGRIAYVLGTDGPALTVDTACSSSLVALHLAVQALRKGECDMALAGGVTVMPNADLFVQFSRQRGLAADGRSKAFATSADGFGPAEGAGVLLVERLSDARRNGHRILAVVRGSAVNQDGASNGLTAPHGPSQQRVIRRALADARLAPGDVDVVEAHGTGTRLGDPIEAQALIATYGQEKSSEQPLRLGALKSNIGHTQAAAGVAGVIKMVQAMRHGLLPKTLHVDEPSDQIDWSAGTVELLTEAVDWPEKQDGGLRRAAVSSFGISGTNAHVVLEEAPAVEDSPAVEPPAGGGVVPWPVSAKTPAALDAQIGQLAAYADGRTDVDPAVAARALVDSRTAMEHRAVAVGDSREALRDALRMPEGLVRGTSSDVGRVAFVFPGQGTQWAGMGAELLDSSPEFAASMAECETALSRYVDWSLEAVVRQEPGAPTLDRVDVVQPVTFAVMVSLAKVWQHHGITPQAVVGHSQGEIAAAYVAGALTLDDAARVVTLRSKSIAAHLAGKGGMISLALDEAAVLKRLSDFDGLSVAAVNGPTATVVSGDPTQIEELARTCEADGVRARIIPVDYASHSRQVEIIEKELAEVLAGLAPQAPHVPFFSTLEGTWITEPVLDGTYWYRNLRHRVGFAPAVETLAVDGFTHFIEVSAHPVLTMTLPETVTGLGTLRREQGGQERLVTSLAEAWANGLTIDWAPILPTATGHHPELPTYAFQTERFWLQSSAPTSAADDWRYRVEWKPLTASGQADLSGRWIVAVGSEPEAELLGALKAAGAEVDVLEAGADDDREALAARLTALTTGDGFTGVVSLLDDLVPQVAWVQALGDAGIKAPLWSVTQGAVSVGRLDTPADPDRAMLWGLGRVVALEHPERWAGLVDLPAQPDAAALAHLVTALSGATGEDQIAIRTTGLHARRLARAPLHGRRPTRDWQPHGTVLITGGTGALGSHAARWMAHHGAEHLLLVSRSGEQAPGATQLTAELTASGARVTIAACDVADPHAMRTLLDAIPAETPLTAVVHTAGAPGGDPLDVTGPEDIARILGAKTSGAEVLDDLLRGTPLDAFVLYSSNAGVWGSGSQGVYAAANAHLDALAARRRARGETATSVAWGLWAGDGMGRGADDAYWQRRGIRPMSPDRALDELAKALSHDETFVAVADVDWERFAPAFTVSRPSLLLDGVPEARQALAAPVGAPAPGDAAVAPTGQSSALAAITALPEPERRPALLTLVRTHAAAVLGHSSPDRVAPGRAFTELGFDSLTAVQLRNQLSTVVGNRLPATTVFDHPTPAALAAHLHEAYLAPAEPAPTDWEGRVRRALAELPLDRLRDAGVLDTVLRLTGIEPEPGSGGSDGGAADPGAEPEASIDDLDAEALIRMALGPRNT.

Positions 34 to 464 (HEPVAIVGMA…GTNAHVVLEE (431 aa)) constitute a Ketosynthase family 3 (KS3) domain. The module 5 stretch occupies residues 37–1475 (VAIVGMACRL…TPAALAAHLH (1439 aa)). Cys-209 acts as the Acyl-thioester intermediate; for beta-ketoacyl synthase activity in catalysis. Residues His-344 and His-384 each act as for beta-ketoacyl synthase activity in the active site. Residues 565 to 866 (FVFPGQGTQW…GGQERLVTSL (302 aa)) form an acyltransferase region. Ser-655 functions as the Acyl-ester intermediate; for acyltransferase activity in the catalytic mechanism. Positions 1116–1293 (GTVLITGGTG…ATSVAWGLWA (178 aa)) are beta-ketoacyl reductase. Residues 1124–1127 (TGAL), 1147–1150 (SRSG), 1176–1177 (DV), Lys-1226, and 1248–1249 (YS) each bind NADP(+). The active-site Acyl-ester intermediate; for beta-ketoacyl reductase activity is Tyr-1263. The 76-residue stretch at 1403-1478 (PALLTLVRTH…ALAAHLHEAY (76 aa)) folds into the Carrier domain. Ser-1438 carries the O-(pantetheine 4'-phosphoryl)serine modification. Residues 1519-1548 (GIEPEPGSGGSDGGAADPGAEPEASIDDLD) form a disordered region. Positions 1532 to 1541 (GAADPGAEPE) are enriched in low complexity.

As to quaternary structure, homodimer. Pikromycin PKS consists of a combination of multimodular (PikAI and PikAII) and monomodular (PikAIII and PikAIV) polypeptides each coding for a functional synthase subunit which participates in 1 (monomodular) or 2 (multimodular) of the six FAS-like elongation steps required for formation of the polyketide. Module 1, 2, 3, 4, 5, and 6 participating in biosynthesis steps 1, 2, 3, 4, 5, and 6, respectively. It depends on pantetheine 4'-phosphate as a cofactor.

It catalyses the reaction 5 (S)-methylmalonyl-CoA + malonyl-CoA + 5 NADPH + 11 H(+) = 10-deoxymethynolide + 6 CO2 + 5 NADP(+) + 6 CoA + 2 H2O. It carries out the reaction 6 (S)-methylmalonyl-CoA + malonyl-CoA + 5 NADPH + 12 H(+) = narbonolide + 7 CO2 + 5 NADP(+) + 7 CoA + 2 H2O. Its pathway is antibiotic biosynthesis. In terms of biological role, involved in the biosynthesis of 12- and 14-membered ring macrolactone antibiotics such as methymycin and neomethymycin, and pikromycin and narbomycin, respectively. Component of the pikromycin PKS which catalyzes the biosynthesis of both precursors 10-deoxymethynolide (12-membered ring macrolactone) and narbonolide (14-membered ring macrolactone). Chain elongation through PikAI, PikAII and PikAIII followed by thioesterase catalyzed termination results in the production of 10-deoxymethynolide, while continued elongation through PikAIV, followed by thioesterase (TE) catalyzed cyclization results in the biosynthesis of the narbonolide. This is Pikromycin polyketide synthase component PikAIII from Streptomyces venezuelae.